The following is a 277-amino-acid chain: Ras suppressor protein 1 (277 aa).

Positions Met-1 to Ser-23 are disordered. Ser-2 bears the N-acetylserine mark. Positions Lys-7 to Ser-23 are enriched in basic and acidic residues. LRR repeat units lie at residues His-41–Lys-63, Asn-64–Leu-85, Lys-87–Pro-109, Ala-110–Leu-133, Thr-135–Leu-156, Lys-158–Leu-179, and Gln-181–Leu-202. Residues Met-250–Lys-277 are disordered. The span at Pro-256–Lys-265 shows a compositional bias: basic and acidic residues.

Potentially plays a role in the Ras signal transduction pathway. Capable of suppressing v-Ras transformation in vitro. This Bos taurus (Bovine) protein is Ras suppressor protein 1 (RSU1).